A 347-amino-acid polypeptide reads, in one-letter code: Uroporphyrinogen decarboxylase (347 aa).

Substrate-binding positions include 36–40, Asp86, Tyr160, Ser212, and His326; that span reads RQAGR.

The protein belongs to the uroporphyrinogen decarboxylase family. As to quaternary structure, homodimer.

The protein resides in the cytoplasm. The enzyme catalyses uroporphyrinogen III + 4 H(+) = coproporphyrinogen III + 4 CO2. The protein operates within porphyrin-containing compound metabolism; protoporphyrin-IX biosynthesis; coproporphyrinogen-III from 5-aminolevulinate: step 4/4. Its function is as follows. Catalyzes the decarboxylation of four acetate groups of uroporphyrinogen-III to yield coproporphyrinogen-III. This Wolbachia sp. subsp. Brugia malayi (strain TRS) protein is Uroporphyrinogen decarboxylase.